The primary structure comprises 426 residues: Serine--tRNA ligase (426 aa).

235–237 (TAE) contacts L-serine. An ATP-binding site is contributed by 266–268 (RRE). L-serine is bound at residue E289. 353–356 (EISS) is an ATP binding site. S389 contacts L-serine.

This sequence belongs to the class-II aminoacyl-tRNA synthetase family. Type-1 seryl-tRNA synthetase subfamily. As to quaternary structure, homodimer. The tRNA molecule binds across the dimer.

The protein resides in the cytoplasm. The catalysed reaction is tRNA(Ser) + L-serine + ATP = L-seryl-tRNA(Ser) + AMP + diphosphate + H(+). The enzyme catalyses tRNA(Sec) + L-serine + ATP = L-seryl-tRNA(Sec) + AMP + diphosphate + H(+). Its pathway is aminoacyl-tRNA biosynthesis; selenocysteinyl-tRNA(Sec) biosynthesis; L-seryl-tRNA(Sec) from L-serine and tRNA(Sec): step 1/1. Its function is as follows. Catalyzes the attachment of serine to tRNA(Ser). Is also able to aminoacylate tRNA(Sec) with serine, to form the misacylated tRNA L-seryl-tRNA(Sec), which will be further converted into selenocysteinyl-tRNA(Sec). The polypeptide is Serine--tRNA ligase (Nostoc sp. (strain PCC 7120 / SAG 25.82 / UTEX 2576)).